The chain runs to 66 residues: Phylloseptin-S2 (66 aa).

An N-terminal signal peptide occupies residues Met-1 to Cys-22. A propeptide spanning residues Glu-23–Arg-46 is cleaved from the precursor. The tract at residues Glu-25–Glu-44 is disordered. Residues Glu-30–Lys-41 are compositionally biased toward acidic residues. Phe-65 carries the phenylalanine amide modification.

Expressed by the skin glands.

Its subcellular location is the secreted. It localises to the target cell membrane. In terms of biological role, antimicrobial peptide with high activity against Gram-positive bacteria, moderate activity against Gram-negative bacteria, and moderate activity against fungi. Acts by causing bacterial membrane disruption inducing leakage of the intracellular content followed by cell death. It adopts an alpha-helical amphipathic structure in membrane environments. Also shows highly potent antiparasitic activity against Leishmania species. Shows moderate hemolytic activity on human erythrocytes (LC(50)=25 uM). Is also active on human monocytes (IC(50)=22.5 uM). The chain is Phylloseptin-S2 from Phyllomedusa sauvagei (Sauvage's leaf frog).